A 63-amino-acid polypeptide reads, in one-letter code: Adipokinetic prohormone type 1 (63 aa).

The N-terminal stretch at 1-22 (MVQRCLVVALLVVVVAAALCSA) is a signal peptide. Q23 carries the pyrrolidone carboxylic acid modification. Residue T32 is modified to Threonine amide.

The protein belongs to the AKH/HRTH/RPCH family. As to quaternary structure, adipokinetic hormone precursor-related peptide (APRP) can form three type of disulfide-bond dimers: p1 (alpha-alpha), p2 (alpha-beta), and p3 (beta-beta).

The protein resides in the secreted. Its function is as follows. This hormone, released from cells in the corpora cardiaca, causes release of diglycerides from the fat body and stimulation of muscles to use these diglycerides as an energy source during energy-demanding processes. The protein is Adipokinetic prohormone type 1 of Schistocerca gregaria (Desert locust).